The following is a 253-amino-acid chain: AA9 family lytic polysaccharide monooxygenase F (253 aa).

An N-terminal signal peptide occupies residues 1–16 (MKVLATLLASVGLVAA). Residue histidine 17 coordinates Cu(2+). Residue asparagine 22 is glycosylated (N-linked (GlcNAc...) asparagine). Cystine bridges form between cysteine 75–cysteine 193 and cysteine 163–cysteine 253. A Cu(2+)-binding site is contributed by histidine 105. Residue asparagine 143 is glycosylated (N-linked (GlcNAc...) asparagine). Residues histidine 179 and glutamine 188 each contribute to the O2 site. Tyrosine 190 is a Cu(2+) binding site.

The protein belongs to the polysaccharide monooxygenase AA9 family. Cu(2+) serves as cofactor.

Its subcellular location is the secreted. It catalyses the reaction [(1-&gt;4)-beta-D-glucosyl]n+m + reduced acceptor + O2 = 4-dehydro-beta-D-glucosyl-[(1-&gt;4)-beta-D-glucosyl]n-1 + [(1-&gt;4)-beta-D-glucosyl]m + acceptor + H2O.. In terms of biological role, lytic polysaccharide monooxygenase (LPMO) that depolymerizes crystalline and amorphous polysaccharides via the oxidation of scissile alpha- or beta-(1-4)-glycosidic bonds, yielding C1 or C4 oxidation products. Catalysis by LPMOs requires the reduction of the active-site copper from Cu(II) to Cu(I) by a reducing agent and H(2)O(2) or O(2) as a cosubstrate. The sequence is that of AA9 family lytic polysaccharide monooxygenase F from Podospora anserina (strain S / ATCC MYA-4624 / DSM 980 / FGSC 10383) (Pleurage anserina).